Reading from the N-terminus, the 179-residue chain is Interleukin-10 (179 aa).

The N-terminal stretch at 1–19 (MPSPALLCCCLVLLAGVGA) is a signal peptide. 2 disulfide bridges follow: cysteine 31–cysteine 127 and cysteine 81–cysteine 133. Asparagine 135 is a glycosylation site (N-linked (GlcNAc...) asparagine).

This sequence belongs to the IL-10 family. As to quaternary structure, homodimer. Interacts with IL10RA and IL10RB.

The protein localises to the secreted. Functionally, major immune regulatory cytokine that acts on many cells of the immune system where it has profound anti-inflammatory functions, limiting excessive tissue disruption caused by inflammation. Mechanistically, IL10 binds to its heterotetrameric receptor comprising IL10RA and IL10RB leading to JAK1 and STAT2-mediated phosphorylation of STAT3. In turn, STAT3 translocates to the nucleus where it drives expression of anti-inflammatory mediators. Targets antigen-presenting cells (APCs) such as macrophages and monocytes and inhibits their release of pro-inflammatory cytokines including granulocyte-macrophage colony-stimulating factor /GM-CSF, granulocyte colony-stimulating factor/G-CSF, IL-1 alpha, IL-1 beta, IL-6, IL-8 and TNF-alpha. Also interferes with antigen presentation by reducing the expression of MHC-class II and co-stimulatory molecules, thereby inhibiting their ability to induce T cell activation. In addition, controls the inflammatory response of macrophages by reprogramming essential metabolic pathways including mTOR signaling. The sequence is that of Interleukin-10 (IL10) from Vulpes vulpes (Red fox).